A 525-amino-acid chain; its full sequence is MNTANFPWLTTIILLPIAASLLIPIIPDKDGKTIRWYALTVGLIDFALIVYAFYTSYDFANPDLQLVESYPWVPQLDLNWSVGADGLSMPLIILTGFITTLATLAAWPVTLKPRLFYFLLLAMYGGQIAVFAVQDMLLFFLVWELELIPVYLLLAIWGGKKRQYAATKFILYTAGGSLFILLASLTMAFYGDTVTFDMRSLALKDYALNFQLLLYAGFLIAYAIKLPIIPLHTWLPDAHGEATAPAHMLLAGILLKMGGYALIRMNAGILPDAHAYFAPVLVVLGVVNIIYAALTSFAQRNLKRKIAYSSISHMGFVIIGFASFTDLGLSGAVLQMVSHGLIGASLFFLVGATYDRTHTLMLDEMGGVGKRMPKIFAMFTACSMASLALPGMSGFVAELMVFVGFATSDAYSSTFKVIVVFLMAVGVILTPIYLLSMLREIFYGKENEELVSHQQLIDAEPREVFVIACLLVPIIGIGFYPKLLTQMYDATTVQLTARLRDSVPTLAQEKQEVARVSLSAPVIGN.

14 consecutive transmembrane segments (helical) span residues 6-26 (FPWL…IPII), 36-56 (WYAL…FYTS), 91-111 (LIIL…PVTL), 115-135 (LFYF…AVQD), 137-157 (LLFF…LAIW), 169-189 (FILY…TMAF), 212-232 (LLLY…IPLH), 243-263 (TAPA…YALI), 277-297 (FAPV…LTSF), 314-334 (MGFV…GAVL), 335-355 (QMVS…ATYD), 375-397 (IFAM…GFVA), 417-437 (VIVV…LLSM), and 464-484 (VFVI…PKLL).

This sequence belongs to the complex I subunit 4 family.

It is found in the cellular thylakoid membrane. The enzyme catalyses a plastoquinone + NADH + (n+1) H(+)(in) = a plastoquinol + NAD(+) + n H(+)(out). It carries out the reaction a plastoquinone + NADPH + (n+1) H(+)(in) = a plastoquinol + NADP(+) + n H(+)(out). NDH-1 shuttles electrons from NAD(P)H, via FMN and iron-sulfur (Fe-S) centers, to quinones in the respiratory chain. The immediate electron acceptor for the enzyme in this species is believed to be plastoquinone. Couples the redox reaction to proton translocation (for every two electrons transferred, four hydrogen ions are translocated across the cytoplasmic membrane), and thus conserves the redox energy in a proton gradient. The protein is NAD(P)H-quinone oxidoreductase chain 4-2 (ndhD2) of Nostoc sp. (strain PCC 7120 / SAG 25.82 / UTEX 2576).